Here is a 97-residue protein sequence, read N- to C-terminus: Mitochondrial import inner membrane translocase subunit Tim8 A (97 aa).

The Twin CX3C motif motif lies at 43–66 (CWEKCMDKPGPKLDSRAEACFVNC). Cystine bridges form between C43/C66 and C47/C62. A phosphoserine mark is found at S57, S87, S94, and S96.

Belongs to the small Tim family. In terms of assembly, heterohexamer; composed of 3 copies of TIMM8A and 3 copies of TIMM13, named soluble 70 kDa complex. Associates with the TIM22 complex, whose core is composed of TIMM22.

It localises to the mitochondrion inner membrane. Its function is as follows. Mitochondrial intermembrane chaperone that participates in the import and insertion of some multi-pass transmembrane proteins into the mitochondrial inner membrane. Also required for the transfer of beta-barrel precursors from the TOM complex to the sorting and assembly machinery (SAM complex) of the outer membrane. Acts as a chaperone-like protein that protects the hydrophobic precursors from aggregation and guide them through the mitochondrial intermembrane space. The TIMM8-TIMM13 complex mediates the import of proteins such as TIMM23, SLC25A12/ARALAR1 and SLC25A13/ARALAR2, while the predominant TIMM9-TIMM10 70 kDa complex mediates the import of much more proteins. This Rattus norvegicus (Rat) protein is Mitochondrial import inner membrane translocase subunit Tim8 A (Timm8a).